We begin with the raw amino-acid sequence, 122 residues long: MNAPAAFESFLLLDDKKFYIEKDTKVPNAAIFTIMKEDHTLGNMLKIQLLKDPEVLFAGYKNPHPLEHKILLRIQTTNNTTPADALTTAITDLVGELSLLEHRIDAAIKKCTQSGDQERGYN.

The protein belongs to the archaeal Rpo11/eukaryotic RPB11/RPC19 RNA polymerase subunit family. In terms of assembly, component of the RNA polymerase II (Pol II) complex consisting of 12 subunits.

The protein localises to the nucleus. In terms of biological role, DNA-dependent RNA polymerase catalyzes the transcription of DNA into RNA using the four ribonucleoside triphosphates as substrates. Component of RNA polymerase II which synthesizes mRNA precursors and many functional non-coding RNAs. Pol II is the central component of the basal RNA polymerase II transcription machinery. It is composed of mobile elements that move relative to each other. RPB11 is part of the core element with the central large cleft. This is Probable DNA-directed RNA polymerase II subunit RPB11 (rpb-11) from Caenorhabditis elegans.